The chain runs to 105 residues: Thioredoxin (105 aa).

Residues 2-105 (VKQIESKSAF…KLEATINELL (104 aa)) enclose the Thioredoxin domain. Lysine 3 carries the post-translational modification N6-acetyllysine. Residue lysine 8 is modified to N6-succinyllysine. Active-site nucleophile residues include cysteine 32 and cysteine 35. A disulfide bridge links cysteine 32 with cysteine 35. N6-acetyllysine is present on lysine 39. S-nitrosocysteine is present on residues cysteine 62 and cysteine 69. The residue at position 73 (cysteine 73) is an S-nitrosocysteine; alternate. Lysine 94 is modified (N6-acetyllysine; alternate). Residue lysine 94 is modified to N6-succinyllysine; alternate.

Belongs to the thioredoxin family. In terms of assembly, homodimer; disulfide-linked. Interacts with TXNIP through the redox-active site. Interacts with MAP3K5 and CASP3. Interacts with APEX1; the interaction stimulates the FOS/JUN AP-1 DNA-binding activity in a redox-dependent manner. Post-translationally, in the fully reduced protein, both Cys-69 and Cys-73 are nitrosylated in response to nitric oxide (NO). When two disulfide bonds are present in the protein, only Cys-73 is nitrosylated. Cys-73 can serve as donor for nitrosylation of target proteins.

It is found in the nucleus. Its subcellular location is the cytoplasm. It localises to the secreted. Participates in various redox reactions through the reversible oxidation of its active center dithiol to a disulfide and catalyzes dithiol-disulfide exchange reactions. Plays a role in the reversible S-nitrosylation of cysteine residues in target proteins, and thereby contributes to the response to intracellular nitric oxide. Nitrosylates the active site Cys of CASP3 in response to nitric oxide (NO), and thereby inhibits caspase-3 activity. Induces the FOS/JUN AP-1 DNA binding activity in ionizing radiation (IR) cells through its oxidation/reduction status and stimulates AP-1 transcriptional activity. In Oryctolagus cuniculus (Rabbit), this protein is Thioredoxin (TXN).